The sequence spans 744 residues: Tripartite motif-containing protein 2 (744 aa).

Serine 10 is modified (phosphoserine). An RING-type zinc finger spans residues 23 to 64; it reads CSICLERYKNPKVLPCLHTFCERCLQNYIPAHSLTLSCPVCR. The segment at 113 to 154 adopts a B box-type zinc-finger fold; it reads GKPLSCPNHDGNVMDFYCQSCETAMCRECTEGEHAEHPTVPL. Positions 118, 121, 141, and 146 each coordinate Zn(2+). Residues 320–421 form a Filamin repeat; sequence TTNAVASETV…IRGSPFKLKV (102 aa). At threonine 371 the chain carries Phosphothreonine. Phosphoserine occurs at positions 375, 424, and 428. The interval 432-462 is disordered; that stretch reads EGVKRRVKSPGSGHVKQKAVKRPASMYSTGK. NHL repeat units lie at residues 473–516, 520–563, 564–605, 609–652, 656–699, and 700–743; these read IFRV…FSND, KSRF…FSSD, GKFK…FQPN, VTRF…FNQE, MLKF…FDGS, and GSFL…YRYL.

Belongs to the TRIM/RBCC family. Forms homooligomers. Interacts with TRIM3; this interaction reduces TRIM2 activity. Interacts with myosin V; myosin V may not be a substrate for ubiquitination. Interacts with NEFL. Interacts with phosphorylated BCL2L11. Interacts with SIRPA. Post-translationally, RING-type zinc finger-dependent and UBE2D1-dependent autoubiquitination.

It is found in the cytoplasm. The enzyme catalyses S-ubiquitinyl-[E2 ubiquitin-conjugating enzyme]-L-cysteine + [acceptor protein]-L-lysine = [E2 ubiquitin-conjugating enzyme]-L-cysteine + N(6)-ubiquitinyl-[acceptor protein]-L-lysine.. It participates in protein modification; protein ubiquitination. Its function is as follows. UBE2D1-dependent E3 ubiquitin-protein ligase that mediates the ubiquitination of NEFL and of phosphorylated BCL2L11. Plays a neuroprotective function. May play a role in neuronal rapid ischemic tolerance. Plays a role in antiviral immunity and limits New World arenavirus infection independently of its ubiquitin ligase activity. In Ailuropoda melanoleuca (Giant panda), this protein is Tripartite motif-containing protein 2 (TRIM2).